A 497-amino-acid polypeptide reads, in one-letter code: Probable cytosol aminopeptidase (497 aa).

Residues Lys263 and Asp268 each contribute to the Mn(2+) site. Lys275 is an active-site residue. Positions 286, 345, and 347 each coordinate Mn(2+). Arg349 is a catalytic residue.

It belongs to the peptidase M17 family. The cofactor is Mn(2+).

The protein localises to the cytoplasm. It catalyses the reaction Release of an N-terminal amino acid, Xaa-|-Yaa-, in which Xaa is preferably Leu, but may be other amino acids including Pro although not Arg or Lys, and Yaa may be Pro. Amino acid amides and methyl esters are also readily hydrolyzed, but rates on arylamides are exceedingly low.. The enzyme catalyses Release of an N-terminal amino acid, preferentially leucine, but not glutamic or aspartic acids.. Its function is as follows. Presumably involved in the processing and regular turnover of intracellular proteins. Catalyzes the removal of unsubstituted N-terminal amino acids from various peptides. This chain is Probable cytosol aminopeptidase, found in Brucella ovis (strain ATCC 25840 / 63/290 / NCTC 10512).